Reading from the N-terminus, the 277-residue chain is Large ribosomal subunit protein uL2 (277 aa).

Residues 225–277 (MNPIDHPHGGGEGKTAAGRHPVSPWGTPSKGFRTRVNKRTDGMIVRRRYSNKG) are disordered.

The protein belongs to the universal ribosomal protein uL2 family. As to quaternary structure, part of the 50S ribosomal subunit. Forms a bridge to the 30S subunit in the 70S ribosome.

Functionally, one of the primary rRNA binding proteins. Required for association of the 30S and 50S subunits to form the 70S ribosome, for tRNA binding and peptide bond formation. It has been suggested to have peptidyltransferase activity; this is somewhat controversial. Makes several contacts with the 16S rRNA in the 70S ribosome. In Nitrosospira multiformis (strain ATCC 25196 / NCIMB 11849 / C 71), this protein is Large ribosomal subunit protein uL2.